Reading from the N-terminus, the 184-residue chain is Photosystem I assembly protein Ycf4 (184 aa).

Helical transmembrane passes span 19–39 and 57–77; these read ISNFCWALILFLGSLGFLLVG and IIFFPQGIVMSFYGIAGLFIS.

Belongs to the Ycf4 family.

The protein resides in the plastid. The protein localises to the chloroplast thylakoid membrane. Seems to be required for the assembly of the photosystem I complex. This Solanum bulbocastanum (Wild potato) protein is Photosystem I assembly protein Ycf4.